A 259-amino-acid chain; its full sequence is Global transcriptional regulator CodY (259 aa).

The segment at 1–155 (MALLQKTRII…GATVVGMEIL (155 aa)) is GAF domain. Residues 203–222 (ASKIADRVGITRSVIVNALR) constitute a DNA-binding region (H-T-H motif). Ser-215 is modified (phosphoserine).

Belongs to the CodY family.

It localises to the cytoplasm. Its function is as follows. DNA-binding global transcriptional regulator which is involved in the adaptive response to starvation and acts by directly or indirectly controlling the expression of numerous genes in response to nutrient availability. During rapid exponential growth, CodY is highly active and represses genes whose products allow adaptation to nutrient depletion. In Bacillus velezensis (strain DSM 23117 / BGSC 10A6 / LMG 26770 / FZB42) (Bacillus amyloliquefaciens subsp. plantarum), this protein is Global transcriptional regulator CodY.